A 265-amino-acid polypeptide reads, in one-letter code: 3-methyl-2-oxobutanoate hydroxymethyltransferase (265 aa).

Aspartate 45 and aspartate 84 together coordinate Mg(2+). 3-methyl-2-oxobutanoate-binding positions include 45–46, aspartate 84, and lysine 112; that span reads DS. Glutamate 114 contributes to the Mg(2+) binding site. Residue glutamate 181 is the Proton acceptor of the active site.

This sequence belongs to the PanB family. Homodecamer; pentamer of dimers. Mg(2+) is required as a cofactor.

It localises to the cytoplasm. The catalysed reaction is 3-methyl-2-oxobutanoate + (6R)-5,10-methylene-5,6,7,8-tetrahydrofolate + H2O = 2-dehydropantoate + (6S)-5,6,7,8-tetrahydrofolate. It participates in cofactor biosynthesis; (R)-pantothenate biosynthesis; (R)-pantoate from 3-methyl-2-oxobutanoate: step 1/2. Catalyzes the reversible reaction in which hydroxymethyl group from 5,10-methylenetetrahydrofolate is transferred onto alpha-ketoisovalerate to form ketopantoate. In Yersinia enterocolitica serotype O:8 / biotype 1B (strain NCTC 13174 / 8081), this protein is 3-methyl-2-oxobutanoate hydroxymethyltransferase.